Consider the following 311-residue polypeptide: Acetyl-coenzyme A carboxylase carboxyl transferase subunit beta (311 aa).

The region spanning 27–296 is the CoA carboxyltransferase N-terminal domain; that stretch reads LWTKCGHCSA…AEAADAPEAG (270 aa). Zn(2+) contacts are provided by C31, C34, C50, and C53. Residues 31–53 form a C4-type zinc finger; that stretch reads CGHCSAVLYRPELERNQEVCPKC. The segment covering 286 to 299 has biased composition (low complexity); it reads AAEAADAPEAGEQP. The tract at residues 286 to 311 is disordered; that stretch reads AAEAADAPEAGEQPSEATDPVGEHWD.

It belongs to the AccD/PCCB family. In terms of assembly, acetyl-CoA carboxylase is a heterohexamer composed of biotin carboxyl carrier protein (AccB), biotin carboxylase (AccC) and two subunits each of ACCase subunit alpha (AccA) and ACCase subunit beta (AccD). Zn(2+) serves as cofactor.

Its subcellular location is the cytoplasm. The catalysed reaction is N(6)-carboxybiotinyl-L-lysyl-[protein] + acetyl-CoA = N(6)-biotinyl-L-lysyl-[protein] + malonyl-CoA. It functions in the pathway lipid metabolism; malonyl-CoA biosynthesis; malonyl-CoA from acetyl-CoA: step 1/1. In terms of biological role, component of the acetyl coenzyme A carboxylase (ACC) complex. Biotin carboxylase (BC) catalyzes the carboxylation of biotin on its carrier protein (BCCP) and then the CO(2) group is transferred by the transcarboxylase to acetyl-CoA to form malonyl-CoA. This chain is Acetyl-coenzyme A carboxylase carboxyl transferase subunit beta, found in Alkalilimnicola ehrlichii (strain ATCC BAA-1101 / DSM 17681 / MLHE-1).